The primary structure comprises 481 residues: Cobyric acid synthase (481 aa).

One can recognise a GATase cobBQ-type domain in the interval 247–433 (AFNVVVPLLP…LHGLFDVPDS (187 aa)). The active-site Nucleophile is the C328. H425 is a catalytic residue.

The protein belongs to the CobB/CobQ family. CobQ subfamily.

It functions in the pathway cofactor biosynthesis; adenosylcobalamin biosynthesis. Its function is as follows. Catalyzes amidations at positions B, D, E, and G on adenosylcobyrinic A,C-diamide. NH(2) groups are provided by glutamine, and one molecule of ATP is hydrogenolyzed for each amidation. The protein is Cobyric acid synthase of Alcanivorax borkumensis (strain ATCC 700651 / DSM 11573 / NCIMB 13689 / SK2).